Consider the following 137-residue polypeptide: Small ribosomal subunit protein eS17 (137 aa).

This sequence belongs to the eukaryotic ribosomal protein eS17 family. Component of the small ribosomal subunit. Mature ribosomes consist of a small (40S) and a large (60S) subunit. The 40S subunit contains about 32 different proteins and 1 molecule of RNA (18S). The 60S subunit contains 45 different proteins and 3 molecules of RNA (25S, 5.8S and 5S).

The protein localises to the cytoplasm. In terms of biological role, component of the ribosome, a large ribonucleoprotein complex responsible for the synthesis of proteins in the cell. The small ribosomal subunit (SSU) binds messenger RNAs (mRNAs) and translates the encoded message by selecting cognate aminoacyl-transfer RNA (tRNA) molecules. The large subunit (LSU) contains the ribosomal catalytic site termed the peptidyl transferase center (PTC), which catalyzes the formation of peptide bonds, thereby polymerizing the amino acids delivered by tRNAs into a polypeptide chain. The nascent polypeptides leave the ribosome through a tunnel in the LSU and interact with protein factors that function in enzymatic processing, targeting, and the membrane insertion of nascent chains at the exit of the ribosomal tunnel. This chain is Small ribosomal subunit protein eS17 (RPS17B), found in Candida albicans (strain SC5314 / ATCC MYA-2876) (Yeast).